Here is a 334-residue protein sequence, read N- to C-terminus: Protein-methionine-sulfoxide reductase catalytic subunit MsrP (334 aa).

The tat-type signal signal peptide spans 1 to 44 (MKKNQFLKESDVTAESVFFMKRRQVLKALGISAAALSLPHAAHA). Mo-molybdopterin-binding positions include N88, 91 to 92 (YE), C146, T181, N233, R238, and 249 to 251 (GIK).

It belongs to the MsrP family. As to quaternary structure, heterodimer of a catalytic subunit (MsrP) and a heme-binding subunit (MsrQ). Mo-molybdopterin serves as cofactor. Post-translationally, predicted to be exported by the Tat system. The position of the signal peptide cleavage has not been experimentally proven.

It localises to the periplasm. The catalysed reaction is L-methionyl-[protein] + a quinone + H2O = L-methionyl-(S)-S-oxide-[protein] + a quinol. It catalyses the reaction L-methionyl-[protein] + a quinone + H2O = L-methionyl-(R)-S-oxide-[protein] + a quinol. Its function is as follows. Part of the MsrPQ system that repairs oxidized periplasmic proteins containing methionine sulfoxide residues (Met-O), using respiratory chain electrons. Thus protects these proteins from oxidative-stress damage caused by reactive species of oxygen and chlorine generated by the host defense mechanisms. MsrPQ is essential for the maintenance of envelope integrity under bleach stress, rescuing a wide series of structurally unrelated periplasmic proteins from methionine oxidation, including the primary periplasmic chaperone SurA and the lipoprotein Pal. The catalytic subunit MsrP is non-stereospecific, being able to reduce both (R-) and (S-) diastereoisomers of methionine sulfoxide. The sequence is that of Protein-methionine-sulfoxide reductase catalytic subunit MsrP from Escherichia coli O127:H6 (strain E2348/69 / EPEC).